A 179-amino-acid chain; its full sequence is Inner membrane-spanning protein YciB (179 aa).

Helical transmembrane passes span 22 to 42 (IYAA…YTWI), 50 to 70 (MALI…FFHN), 76 to 96 (WKVT…QWVM), 121 to 141 (IAWA…AFWM), and 149 to 169 (FKVF…GVYI).

This sequence belongs to the YciB family.

Its subcellular location is the cell inner membrane. Functionally, plays a role in cell envelope biogenesis, maintenance of cell envelope integrity and membrane homeostasis. The protein is Inner membrane-spanning protein YciB of Enterobacter sp. (strain 638).